The sequence spans 429 residues: MQFKNALTATAILSASALAANSTTSIPSSCSIGTSATATAQADLDKISGCSTIVGNLTITGDLGSAALASIQEIDGSLTIFNSSSLSSFSADSIKKITGDLNMQELIILTSASFGSLQEVDSINMVTLPAISTFSTDLQNANNIIVSDTTLESVEGFSTLKKVNVFNINNNRYLNSFQSSLESVSDSLQFSSNGDNTTLAFDNLVWANNITLRDVNSISFGSLQTVNASLGFINNTLPSLNLTQLSKVGQSLSIVSNDELSKAAFSNLTTVGGGFIIANNTQLKVIDGFNKVQTVGGAIEVTGNFSTLDLSSLKSVRGGANFDSSSSNFSCNALKKLQSNGAIQGDSFVCKNGATSTSVKLSSTSTESSKSSATSSASSSGDASNAQASVSASASSSSSSSKKSKGAAPELVPATSFMGVVAAVAVALL.

The signal sequence occupies residues 1-19 (MQFKNALTATAILSASALA). N-linked (GlcNAc...) asparagine glycosylation is found at asparagine 21, asparagine 56, asparagine 82, asparagine 196, asparagine 209, asparagine 227, asparagine 234, asparagine 241, asparagine 267, asparagine 279, asparagine 304, and asparagine 328. Serine 339 is subject to Phosphoserine. Low complexity predominate over residues 361–401 (LSSTSTESSKSSATSSASSSGDASNAQASVSASASSSSSSS). Residues 361–410 (LSSTSTESSKSSATSSASSSGDASNAQASVSASASSSSSSSKKSKGAAPE) form a disordered region. Glycine 406 carries the GPI-anchor amidated glycine lipid modification. A propeptide spans 407 to 429 (AAPELVPATSFMGVVAAVAVALL) (removed in mature form).

It belongs to the SPS2 family. The GPI-anchor is attached to the protein in the endoplasmic reticulum and serves to target the protein to the cell surface. There, the glucosamine-inositol phospholipid moiety is cleaved off and the GPI-modified mannoprotein is covalently attached via its lipidless GPI glycan remnant to the 1,6-beta-glucan of the outer cell wall layer.

The protein localises to the cell membrane. It is found in the secreted. Its subcellular location is the cell wall. Its function is as follows. Required for proper cell wall integrity and for the correct assembly of the mannoprotein outer layer of the cell wall. Important for apical bud growth. This is Cell wall protein ECM33 (ECM33) from Saccharomyces cerevisiae (strain YJM789) (Baker's yeast).